We begin with the raw amino-acid sequence, 259 residues long: MIQIEALPAFSDNYIWLLQDTAKRRCAVVDPGDAGPVERWLAANPEWVLSDILVTHHHNDHVGGVERLRQLTGARVCGPANERIPGRDLALDEGDRVDVLGVTFQVMAVPGHTLGHIAFFSDQPATPILFSGDTLFAAGCGRMFEGTPEQMQPALARLAALPEQTQVYCAHEYTLSNLRFAKAVEPTNPHVQQRFEDVTRLRAENRISLPSTIGLERLTNPFLRTAETLVKQKADEWKGHSNNSHVAVFAALRSWKDTF.

His56, His58, Asp60, His61, His112, Asp133, and His171 together coordinate Zn(2+).

Belongs to the metallo-beta-lactamase superfamily. Glyoxalase II family. Monomer. Zn(2+) is required as a cofactor.

The enzyme catalyses an S-(2-hydroxyacyl)glutathione + H2O = a 2-hydroxy carboxylate + glutathione + H(+). Its pathway is secondary metabolite metabolism; methylglyoxal degradation; (R)-lactate from methylglyoxal: step 2/2. Its function is as follows. Thiolesterase that catalyzes the hydrolysis of S-D-lactoyl-glutathione to form glutathione and D-lactic acid. The protein is Hydroxyacylglutathione hydrolase of Pseudomonas putida (strain ATCC 47054 / DSM 6125 / CFBP 8728 / NCIMB 11950 / KT2440).